The following is a 911-amino-acid chain: Eukaryotic translation initiation factor 3 subunit C (911 aa).

Disordered regions lie at residues 1–38 and 155–181; these read MSRFFANGSDSESESSEEEVQAPNFNKASAFQFSDDEE and SRFREAPDQESEAEDEEAHVSDAGEAA. Over residues 11–20 the composition is skewed to acidic residues; sequence SESESSEEEV. Positions 23–32 are enriched in polar residues; sequence PNFNKASAFQ. A phosphoserine mark is found at Ser34, Ser165, Ser175, and Ser184. Positions 162-171 are enriched in acidic residues; sequence DQESEAEDEE. The span at 196–208 shows a compositional bias: low complexity; the sequence is APKIAKSAPAKSV. The interval 196–284 is disordered; that stretch reads APKIAKSAPA…KRAEDDEDGE (89 aa). Residues 210–236 are compositionally biased toward acidic residues; the sequence is ADDEDSDDSIDWDSDSESETESSEDEN. A compositionally biased stretch (basic and acidic residues) spans 241–271; the sequence is MRERFLKRSTEKGEDKGDDDKRKDKRKEQKL. In terms of domain architecture, PCI spans 642-818; that stretch reads FHMHINLELL…ETVVMHRSEP (177 aa). The tract at residues 851 to 911 is disordered; that stretch reads FQRGNMGNRG…QQQVQTIDEE (61 aa). Residues 885-896 are compositionally biased toward basic residues; sequence QRNRNQRGHHKN. The segment covering 897–911 has biased composition (low complexity); sequence QQQQQQQQVQTIDEE.

The protein belongs to the eIF-3 subunit C family. Component of the eukaryotic translation initiation factor 3 (eIF-3) complex. The eIF-3 complex interacts with pix.

The protein resides in the cytoplasm. Its function is as follows. Component of the eukaryotic translation initiation factor 3 (eIF-3) complex, which is involved in protein synthesis of a specialized repertoire of mRNAs and, together with other initiation factors, stimulates binding of mRNA and methionyl-tRNAi to the 40S ribosome. The eIF-3 complex specifically targets and initiates translation of a subset of mRNAs involved in cell proliferation. This chain is Eukaryotic translation initiation factor 3 subunit C, found in Drosophila pseudoobscura pseudoobscura (Fruit fly).